The chain runs to 923 residues: Smoothelin (923 aa).

Position 2 is an N-acetylalanine (Ala2). A coiled-coil region spans residues 24 to 89 (LAERRRIRSA…ARLAGRLESM (66 aa)). Residues 134 to 456 (SRLPSSGPRE…GTGEPGGSMK (323 aa)) form a disordered region. 2 stretches are compositionally biased toward low complexity: residues 164 to 179 (QEQQ…TPED) and 192 to 205 (RAPP…PASP). The segment covering 237 to 252 (LPHPSEAPSPEPPMSP) has biased composition (pro residues). Composition is skewed to polar residues over residues 272-285 (PSDT…FSNT) and 293-314 (TKSC…NREP). Ser299, Ser301, Ser304, and Ser340 each carry phosphoserine. Phosphothreonine is present on residues Thr359 and Thr372. A compositionally biased stretch (low complexity) spans 366-389 (PSLISTTPASSSSSNSSSPSPSDT). Phosphoserine occurs at positions 501, 521, and 574. 2 disordered regions span residues 542–578 (KMEP…PLSA) and 615–772 (QRKR…ARKA). Residues 601-628 (EERKLIRAALRELRQRKRDQRDKERERR) are a coiled coil. Over residues 615 to 638 (QRKRDQRDKERERRLREARARPGE) the composition is skewed to basic and acidic residues. Ser641 bears the Phosphoserine mark. Positions 674–687 (NDGTQTARTTTVES) are enriched in polar residues. Over residues 697–721 (SSSSSTTTTTVQTKSFSSSSSSSSS) the composition is skewed to low complexity. Ser735 carries the post-translational modification Phosphoserine. The segment covering 744–756 (LERRQAEKKKELM) has biased composition (basic and acidic residues). At Ser798 the chain carries Phosphoserine. A Calponin-homology (CH) domain is found at 805 to 912 (NSIKQMLLDW…YVQSLYNHLR (108 aa)).

Belongs to the smoothelin family.

The protein resides in the cytoplasm. The protein localises to the cytoskeleton. Its function is as follows. Structural protein of the cytoskeleton. The chain is Smoothelin (Smtn) from Mus musculus (Mouse).